A 430-amino-acid polypeptide reads, in one-letter code: Sphingosine-1-phosphate phosphatase 1 (430 aa).

A disordered region spans residues 34-100; that stretch reads GSPKAGEDAE…PRRAGSLRRN (67 aa). A Phosphoserine modification is found at Ser101. Thr103 is subject to Phosphothreonine. Helical transmembrane passes span 121-141, 152-172, 193-213, and 216-236; these read FCFG…PFWI, LVII…IIRW, MPST…LLTY, and WQYP…LVCL. The tract at residues 167–175 is phosphatase sequence motif I; sequence KDIIRWPRP. The phosphatase sequence motif II stretch occupies residues 194–197; the sequence is PSTH. The Proton donor role is filled by His197. Residues 237-248 form a phosphatase sequence motif III region; sequence SRIYMGMHSILD. His244 acts as the Nucleophile in catalysis. Helical transmembrane passes span 246-266, 279-299, 311-331, 348-368, and 409-429; these read ILDV…FYPL, YAPL…FTLD, ILGS…LGIS, VTLF…VLFV, and YGTV…FIGI.

This sequence belongs to the type 2 lipid phosphate phosphatase family.

The protein localises to the endoplasmic reticulum membrane. The protein resides in the cell membrane. The catalysed reaction is sphinganine 1-phosphate + H2O = sphinganine + phosphate. It catalyses the reaction sphing-4-enine 1-phosphate + H2O = sphing-4-enine + phosphate. Functionally, specifically dephosphorylates sphingosine 1-phosphate (S1P), dihydro-S1P, and phyto-S1P. Does not act on ceramide 1-phosphate, lysophosphatidic acid or phosphatidic acid. Sphingosine-1-phosphate phosphatase activity is needed for efficient recycling of sphingosine into the sphingolipid synthesis pathway. Regulates the intracellular levels of the bioactive sphingolipid metabolite S1P that regulates diverse biological processes acting both as an extracellular receptor ligand or as an intracellular second messenger. Involved in efficient ceramide synthesis from exogenous sphingoid bases. Converts S1P to sphingosine, which is readily metabolized to ceramide via ceramide synthase. In concert with sphingosine kinase 2 (SphK2), recycles sphingosine into ceramide through a phosphorylation/dephosphorylation cycle. Regulates endoplasmic-to-Golgi trafficking of ceramides, resulting in the regulation of ceramide levels in the endoplasmic reticulum, preferentially long-chain ceramide species, and influences the anterograde membrane transport of both ceramide and proteins from the endoplasmic reticulum to the Golgi apparatus. The modulation of intracellular ceramide levels in turn regulates apoptosis. Via S1P levels, modulates resting tone, intracellular Ca(2+) and myogenic vasoconstriction in resistance arteries. Also involved in unfolded protein response (UPR) and ER stress-induced autophagy via regulation of intracellular S1P levels. Involved in the regulation of epidermal homeostasis and keratinocyte differentiation. This chain is Sphingosine-1-phosphate phosphatase 1, found in Rattus norvegicus (Rat).